The chain runs to 805 residues: Angiotensin-converting enzyme 2 (805 aa).

A signal peptide spans 1-17 (MSSSCWLLLSLVAVATA). The Extracellular portion of the chain corresponds to 18 to 740 (QSLIEEKAES…LKPPYEPPVT (723 aa)). One can recognise a Peptidase M2 domain in the interval 19 to 607 (SLIEEKAESF…QNRNSTVGWS (589 aa)). N-linked (GlcNAc...) asparagine glycosylation is found at N53, N82, and N90. C133 and C141 are joined by a disulfide. R169 contributes to the chloride binding site. R273 contacts substrate. A glycan (N-linked (GlcNAc...) asparagine) is linked at N299. A disulfide bridge links C344 with C361. 345–346 (HP) serves as a coordination point for substrate. H374 lines the Zn(2+) pocket. E375 serves as the catalytic Proton acceptor. Residues H378 and E402 each contribute to the Zn(2+) site. An N-linked (GlcNAc...) asparagine glycan is attached at N432. Residues W477 and K481 each coordinate chloride. H505 functions as the Proton donor in the catalytic mechanism. Y515 contacts substrate. C530 and C542 are joined by a disulfide. N-linked (GlcNAc...) asparagine glycans are attached at residues N546 and N601. The Collectrin-like domain maps to 614 to 805 (ADQSIKVRIS…QNSDDAQTSF (192 aa)). The tract at residues 652-659 (REYFSREK) is essential for cleavage by ADAM17. N-linked (GlcNAc...) asparagine glycans are attached at residues N660 and N690. Residues 697–716 (RSEVEEAIRMSRGRINDIFG) form an essential for cleavage by TMPRSS11D and TMPRSS2 region. The chain crosses the membrane as a helical span at residues 741 to 761 (IWLIIFGVVMGTVVVGIVILI). The Cytoplasmic portion of the chain corresponds to 762–805 (VTGIKGRKKKNETKREENPYDSMDIGKGESNAGFQNSDDAQTSF). The tract at residues 771–805 (KNETKREENPYDSMDIGKGESNAGFQNSDDAQTSF) is disordered. An LIR motif is present at residues 778–786 (ENPYDSMDI). Phosphotyrosine is present on Y781. The Endocytic sorting signal motif lies at 781–784 (YDSM). An SH2-binding motif is present at residues 781 to 785 (YDSMD). Phosphoserine is present on S783. Residue K788 forms a Glycyl lysine isopeptide (Lys-Gly) (interchain with G-Cter in ubiquitin) linkage. Positions 792–795 (NAGF) match the PTB motif. The segment covering 793–805 (AGFQNSDDAQTSF) has biased composition (polar residues). The PDZ-binding signature appears at 803 to 805 (TSF).

Belongs to the peptidase M2 family. Homodimer. Interacts with the catalytically active form of TMPRSS2. Interacts with SLC6A19; this interaction is essential for expression and function of SLC6A19 in intestine. Interacts with ITGA5:ITGB1. Probably interacts (via endocytic sorting signal motif) with AP2M1; the interaction is inhibited by phosphorylation of Tyr-781. Interacts (via PDZ-binding motif) with NHERF1 (via PDZ domains); the interaction may enhance ACE2 membrane residence. Zn(2+) is required as a cofactor. Chloride serves as cofactor. Glycosylated. Post-translationally, proteolytic cleavage by ADAM17 generates a secreted form. Also cleaved by serine proteases: TMPRSS2, TMPRSS11D and HPN/TMPRSS1. In terms of processing, phosphorylated. Phosphorylation at Tyr-781 probably inhibits interaction with AP2M1 and enables interactions with proteins containing SH2 domains. Ubiquitinated. Ubiquitinated on Lys-788 via 'Lys-48'-linked ubiquitin. 'Lys-48'-linked deubiquitinated by USP50 on the Lys-788; leading to its stabilization. In terms of tissue distribution, expressed in heart, kidney and forebrain. In testis, expression is restricted to Leydig cells. In heart, expressed in endothelial cells from small and large arteries, arterial smooth muscle cells, and myocytes (at protein level). Ubiquitously expressed, with highest levels in ileum, bladder and lung.

It is found in the secreted. It localises to the cell membrane. Its subcellular location is the cytoplasm. The protein resides in the cell projection. The protein localises to the cilium. It is found in the apical cell membrane. It catalyses the reaction angiotensin II + H2O = angiotensin-(1-7) + L-phenylalanine. The catalysed reaction is angiotensin I + H2O = angiotensin-(1-9) + L-leucine. The enzyme catalyses bradykinin(1-8) + H2O = bradykinin(1-7) + L-phenylalanine. It carries out the reaction neurotensin + H2O = neurotensin-(1-12) + L-leucine. It catalyses the reaction kinetensin + H2O = kinetensin-(1-8) + L-leucine. The catalysed reaction is dynorphin A-(1-13) + H2O = dynorphin A-(1-12) + L-lysine. The enzyme catalyses apelin-13 + H2O = apelin-12 + L-phenylalanine. It carries out the reaction [Pyr1]apelin-13 + H2O = [Pyr1]apelin-12 + L-phenylalanine. It catalyses the reaction apelin-17 + H2O = apelin-16 + L-phenylalanine. With respect to regulation, activated by chloride and fluoride, but not bromide. Inhibited by MLN-4760, cFP_Leu, and EDTA, but not by the ACE inhibitors linosipril, captopril, enalaprilat. In terms of biological role, essential counter-regulatory carboxypeptidase of the renin-angiotensin hormone system that is a critical regulator of blood volume, systemic vascular resistance, and thus cardiovascular homeostasis. Converts angiotensin I to angiotensin 1-9, a nine-amino acid peptide with anti-hypertrophic effects in cardiomyocytes, and angiotensin II to angiotensin 1-7, which then acts as a beneficial vasodilator and anti-proliferation agent, counterbalancing the actions of the vasoconstrictor angiotensin II. Also removes the C-terminal residue from three other vasoactive peptides, neurotensin, kinetensin, and des-Arg bradykinin, but is not active on bradykinin. Also cleaves other biological peptides, such as apelins, casomorphins and dynorphin A. Plays an important role in amino acid transport by acting as binding partner of amino acid transporter SLC6A19 in intestine, regulating trafficking, expression on the cell surface, and its catalytic activity. This is Angiotensin-converting enzyme 2 (Ace2) from Rattus norvegicus (Rat).